Consider the following 1261-residue polypeptide: Myosin-1 (1261 aa).

The interval 1 to 39 (MGHSRRPVGGEKKSRGFGRSKVADVGDGRQAGKPQVKKA) is disordered. One can recognise a Myosin motor domain in the interval 49–728 (IGVSDLTLLS…TLFALEAMRD (680 aa)). ATP is bound at residue 142–149 (GESGAGKT). The residue at position 370 (Ser-370) is a Phosphoserine. The actin-binding stretch occupies residues 417–499 (SIGILDIYGF…PGVFAALNDA (83 aa)). 2 consecutive IQ domains span residues 732–752 (HNMA…RIEC) and 753–778 (AIRI…QGHQ). In terms of domain architecture, TH1 spans 786-973 (RRRMSLLGSR…KSHTIHTSPG (188 aa)). Disordered regions lie at residues 956–1093 (ASPN…KALY) and 1139–1261 (YLEE…DDEW). 4 stretches are compositionally biased toward pro residues: residues 1019–1029 (RPTPKPQPLPQ), 1038–1052 (IPAP…PVPQ), 1072–1084 (APPP…PPAP), and 1147–1159 (TPKP…PPAA). Residues 1084 to 1145 (PKKATAKALY…PQAYLEEQVA (62 aa)) form the SH3 domain. Low complexity predominate over residues 1160 to 1181 (PRASPVPSANGAAATAAAAKAK). A compositionally biased stretch (polar residues) spans 1212–1233 (VSMNSQDSSGGSGRGTPNSTSN). The span at 1234–1243 (ASLAGGLAEA) shows a compositional bias: low complexity.

This sequence belongs to the TRAFAC class myosin-kinesin ATPase superfamily. Myosin family. Phosphorylation of the TEDS site (Ser-370) is required for the polarization of the actin cytoskeleton. Phosphorylation probably activates the myosin-I ATPase activity.

Its subcellular location is the cytoplasm. It localises to the cytoskeleton. It is found in the actin patch. Functionally, type-I myosin implicated in the organization of the actin cytoskeleton. Required for proper actin cytoskeleton polarization. At the cell cortex, assembles in patch-like structures together with proteins from the actin-polymerizing machinery and promotes actin assembly. Functions as actin nucleation-promoting factor (NPF) for the Arp2/3 complex. Plays an important role in polarized growth, spore germination, hyphal morphogenesis, and septal wall formation. The chain is Myosin-1 (myoA) from Aspergillus oryzae (strain ATCC 42149 / RIB 40) (Yellow koji mold).